The following is a 125-amino-acid chain: Multifunctional methyltransferase subunit TRM112-like protein (125 aa).

Residues 2 to 119 (KLLTHNLLSS…SRGIPNMLLN (118 aa)) form the TRM112 domain.

Belongs to the TRM112 family. As to quaternary structure, part of the heterodimeric BUD23-TRM112 methyltransferase complex; this heterodimerization is necessary for the metabolic stability and activity of the catalytic subunit BUD23. Part of the heterodimeric N6AMT1-TRM112 methyltransferase complex; this heterodimerization is necessary for S-adenosyl-L-methionine-binding to N6AMT1/HEMK2. Part of the heterodimeric ALKBH8-TRM112 methyltransferase complex. Part of the heterodimeric METTL5-TRM112 methyltransferase complex; this heterodimerization is necessary for the stability of the catalytic subunit METTL5. Part of the heterodimeric THUMPD3-TRM112 methyltransferase complex; this complex forms an active tRNA methyltransferase, where TRMT112 acts as an activator of the catalytic subunit THUMPD3. Part of the heterodimeric THUMPD2-TRM112 methyltransferase complex; this complex forms an active tRNA methyltransferase, where TRMT112 acts as an activator of the catalytic subunit THUMPD2. Part of the heterodimeric TRMT11-TRM112 methyltransferase complex; this complex forms an active tRNA methyltransferase, where TRMT112 acts as an activator of the catalytic subunit TRMT11. As to expression, abundantly expressed in the testis, also expressed in the brain, heart, kidney, liver, lung, muscle and spleen.

The protein resides in the nucleus. It is found in the nucleoplasm. It localises to the cytoplasm. The protein localises to the perinuclear region. In terms of biological role, acts as an activator of both rRNA/tRNA and protein methyltransferases. Together with methyltransferase BUD23, methylates the N(7) position of a guanine in 18S rRNA. The heterodimer with HEMK2/N6AMT1 catalyzes N5-methylation of ETF1 on 'Gln-185', using S-adenosyl L-methionine as methyl donor. The heterodimer with ALKBH8 catalyzes the methylation of 5-carboxymethyl uridine to 5-methylcarboxymethyl uridine at the wobble position of the anticodon loop in target tRNA species. Together with methyltransferase THUMPD3, catalyzes the formation of N(2)-methylguanosine at position 6 in a broad range of tRNA substrates and at position 7 of tRNA(Trp). Involved in the pre-rRNA processing steps leading to small-subunit rRNA production. Together with methyltransferase METTL5, specifically methylates the 6th position of adenine in position 1832 of 18S rRNA. This Mus musculus (Mouse) protein is Multifunctional methyltransferase subunit TRM112-like protein (Trmt112).